A 1503-amino-acid chain; its full sequence is Mitogen-activated protein kinase-binding protein 1 (1503 aa).

WD repeat units lie at residues 89 to 130 (SSRK…QVAE), 133 to 174 (EHKY…VVAS), 176 to 214 (KVSS…TSKV), 271 to 310 (VELR…FLST), 337 to 376 (ARYP…KVGK), 382 to 431 (YHSS…VHGS), 472 to 511 (DPRV…EMLK), 514 to 556 (AHDS…SLQQ), 560 to 601 (EHSS…EGVQ), 609 to 648 (VRKT…QKKL), 654 to 693 (GEDG…CVAT), and 696 to 735 (GHSE…TISM). 3 disordered regions span residues 745 to 817 (RQRG…SSPA), 874 to 917 (LAPS…RLQT), and 951 to 1176 (VYPE…SWAS). Positions 784 to 796 (KEGEDEGTEEEEL) are enriched in acidic residues. Polar residues-rich tracts occupy residues 905–917 (CVSQ…RLQT) and 957–972 (DSPT…QAPT). Residues 1028–1043 (DLEEPAEGDEDEEEEG) are compositionally biased toward acidic residues. The segment covering 1058–1068 (PDQEQFLKQHF) has biased composition (basic and acidic residues). The segment covering 1089–1129 (SQSISSRFLLQVQTSPLREPSLSSSGLALTSRPDQVSQVSG) has biased composition (polar residues). Residue Ser-1193 is modified to Phosphoserine. Disordered stretches follow at residues 1217–1238 (QGSL…SYQN) and 1369–1391 (QGPE…SSRP).

Can form homodimers (via C-terminus). Interacts (via C-terminus) with WDR62 (via C-terminus). Interacts with MAPK9. Interacts (via N-terminus) with NOD2; the interaction is enhanced in presence of muramyl dipeptide (MDP). Interacts with MAPK10. As to expression, ubiquitously expressed. Highest expression observed in brain.

The protein localises to the cytoplasm. The protein resides in the nucleus. Its subcellular location is the cytoskeleton. It localises to the spindle pole. Its function is as follows. Negative regulator of NOD2 function. It down-regulates NOD2-induced processes such as activation of NF-kappa-B signaling, IL8 secretion and antibacterial response. Involved in JNK signaling pathway. The sequence is that of Mitogen-activated protein kinase-binding protein 1 (Mapkbp1) from Mus musculus (Mouse).